A 366-amino-acid polypeptide reads, in one-letter code: Chitoporin (366 aa).

Positions 1-23 are cleaved as a signal peptide; sequence MDKMFKRTVIGAAVALASTGLMA.

This sequence belongs to the Gram-negative porin family.

The protein resides in the cell outer membrane. Its function is as follows. Involved in the uptake of chitosugars. The polypeptide is Chitoporin (chiP) (Vibrio furnissii).